A 202-amino-acid chain; its full sequence is V-type ATP synthase subunit D (202 aa).

This sequence belongs to the V-ATPase D subunit family.

Functionally, produces ATP from ADP in the presence of a proton gradient across the membrane. The sequence is that of V-type ATP synthase subunit D (atpD) from Borreliella burgdorferi (strain ATCC 35210 / DSM 4680 / CIP 102532 / B31) (Borrelia burgdorferi).